The chain runs to 348 residues: uncharacterized protein (348 aa).

WD repeat units lie at residues 59–98 (GFQG…VVYS), 142–182 (GHTD…LIQT), 185–226 (DNLG…LLGT), 229–267 (QQPG…ELFS), 270–309 (GPSL…QVTT), and 312–347 (GHQG…SALA).

This is an uncharacterized protein from Synechocystis sp. (strain ATCC 27184 / PCC 6803 / Kazusa).